Consider the following 1575-residue polypeptide: Ras GTPase-activating-like protein IQGAP2 (1575 aa).

Ser-16 is subject to Phosphoserine. In terms of domain architecture, Calponin-homology (CH) spans 41 to 156 (LCHLEEAKRW…YCIHALSLYL (116 aa)). Position 356 is a phosphothreonine (Thr-356). One can recognise a WW domain in the interval 594 to 627 (ESSEGSWVTLNVQEKYNYYYNTDSKEGSWVPPEL). Phosphoserine is present on residues Ser-595 and Ser-599. IQ domains lie at 690–719 (QTESVVKIQAFWKGFKQRQEYLHRQQVFAG), 720–749 (NVDSVVKIQSWFRMVTARKSYLSRLRYFED), and 750–779 (HKNEIVKIQSLLRASKARDDYKALVGSENP). Phosphothreonine occurs at positions 782, 881, 1002, and 1269. The region spanning 933 to 1182 (YLLLKLFKTA…QEFRKYFQEA (250 aa)) is the Ras-GAP domain. A phosphoserine mark is found at Ser-1279 and Ser-1461.

Binds to activated CDC42 and RAC1 but does not seem to stimulate their GTPase activity. Associates with calmodulin. This chain is Ras GTPase-activating-like protein IQGAP2 (Iqgap2), found in Mus musculus (Mouse).